Consider the following 500-residue polypeptide: NF-kappa-B inhibitor cactus (500 aa).

Low complexity predominate over residues 1–43 (MPSPTKAAEAATKATATSDCSCSAASVEQRAPSNAANPSSSLA). Disordered stretches follow at residues 1-148 (MPSP…MRLK) and 171-212 (LNNL…APPS). Ser45 carries the phosphoserine; by PKC modification. The span at 69-86 (NETSDSGFISGPQSSQIF) shows a compositional bias: polar residues. The segment covering 118–130 (IIDEEEDQEEQEK) has biased composition (acidic residues). A Phosphoserine; by PKC modification is found at Ser144. The span at 171–189 (LNNLGQSSSTQITGRSKVQ) shows a compositional bias: polar residues. Phosphothreonine; by PKC is present on Thr183. The segment covering 190–212 (SSTASTANANPSGSGATSSAPPS) has biased composition (low complexity). ANK repeat units lie at residues 229–261 (DGDTPLHLACISGSVDVVAALIRMAPHPCLLNI), 265–294 (VAQTPLHLAALTAQPNIMRILLLAGAEPTV), 298–327 (HGNTALHLSCIAGEKQCVRALTEKFGATEI), 361–390 (DGERCVHLAAEAGHIDILRILVSHGADINA), and 395–424 (SGRTPLHIAIEGCNEDLANFLLDECEKLNL). 2 positions are modified to phosphothreonine; by PKC: Thr293 and Thr319. The residue at position 395 (Ser395) is a Phosphoserine; by PKC.

It belongs to the NF-kappa-B inhibitor family. Phosphorylated isoform A binds to dorsal (dl); inhibits dl translocation to the nucleus and therefore from binding to DNA. In vitro, interacts with IKKbeta. Interacts with cactin and kappa-B-Ras. Activated IKKbeta phosphorylates cact. In terms of tissue distribution, expressed in ovary (at protein level).

It localises to the cytoplasm. In terms of biological role, involved in the formation of the dorsoventral pattern. It inhibits nuclear translocation of the dorsal morphogen in the dorsal region of the embryo. Acts as a negative regulator of the NF-kappa-B (rel) signaling pathway. Cact is degraded by IKKbeta, this is essential for NF-kappa-B (rel) activation. The chain is NF-kappa-B inhibitor cactus (cact) from Drosophila melanogaster (Fruit fly).